Consider the following 270-residue polypeptide: Diaminopimelate epimerase (270 aa).

The substrate site is built by asparagine 15, glutamine 49, and asparagine 66. Residue cysteine 75 is the Proton donor of the active site. Residues 76–77 (GN), asparagine 155, asparagine 187, and 204–205 (ER) contribute to the substrate site. Cysteine 213 serves as the catalytic Proton acceptor. 214-215 (GS) is a substrate binding site.

This sequence belongs to the diaminopimelate epimerase family. In terms of assembly, homodimer.

Its subcellular location is the cytoplasm. The enzyme catalyses (2S,6S)-2,6-diaminopimelate = meso-2,6-diaminopimelate. The protein operates within amino-acid biosynthesis; L-lysine biosynthesis via DAP pathway; DL-2,6-diaminopimelate from LL-2,6-diaminopimelate: step 1/1. In terms of biological role, catalyzes the stereoinversion of LL-2,6-diaminopimelate (L,L-DAP) to meso-diaminopimelate (meso-DAP), a precursor of L-lysine and an essential component of the bacterial peptidoglycan. This Rickettsia typhi (strain ATCC VR-144 / Wilmington) protein is Diaminopimelate epimerase.